An 843-amino-acid polypeptide reads, in one-letter code: Complement component C7 (843 aa).

The signal sequence occupies residues 1 to 22; that stretch reads MKVISLFILVGFIGEFQSFSSA. The TSP type-1 1 domain occupies 27–80; that stretch reads NCQWDFYAPWSECNGCTKTQTRRRSVAVYGQYGGQPCVGNAFETQSCEPTRGCP. Cystine bridges form between cysteine 28–cysteine 63, cysteine 39–cysteine 73, cysteine 42–cysteine 79, cysteine 85–cysteine 96, cysteine 91–cysteine 109, cysteine 103–cysteine 119, and cysteine 128–cysteine 165. A glycan (C-linked (Man) tryptophan) is linked at tryptophan 36. Positions 83 to 121 constitute an LDL-receptor class A domain; that stretch reads EGCGERFRCFSGQCISKSLVCNGDSDCDEDSADEDRCED. Over residues 108 to 120 the composition is skewed to acidic residues; sequence DCDEDSADEDRCE. Positions 108–143 are disordered; that stretch reads DCDEDSADEDRCEDSERRPSCDIDKPPPNIELTGNG. Basic and acidic residues predominate over residues 121–132; it reads DSERRPSCDIDK. The MACPF domain occupies 124–456; it reads RRPSCDIDKP…EYLDEFDPCH (333 aa). Asparagine 202 carries an N-linked (GlcNAc...) asparagine glycan. The interval 219 to 240 is disordered; sequence SRKRSFFRSSSSSSRSYTSHTN. Over residues 225–234 the composition is skewed to low complexity; sequence FRSSSSSSRS. Intrachain disulfides connect cysteine 337/cysteine 353, cysteine 433/cysteine 560, cysteine 455/cysteine 505, cysteine 457/cysteine 473, cysteine 460/cysteine 475, cysteine 477/cysteine 486, cysteine 512/cysteine 545, cysteine 523/cysteine 535, cysteine 571/cysteine 613, cysteine 599/cysteine 626, cysteine 631/cysteine 673, and cysteine 659/cysteine 688. An EGF-like domain is found at 457 to 487; sequence CRPCQNGGLATVEGTHCLCHCKPYTFGAACE. The 50-residue stretch at 500–549 folds into the TSP type-1 2 domain; sequence DGGWSCWSSWSPCVQGKKTRSRECNNPPPSGGGRSCVGETTESTQCEDEE. 3 C-linked (Man) tryptophan; partial glycosylation sites follow: tryptophan 503, tryptophan 506, and tryptophan 509. Positions 516 to 538 are disordered; the sequence is KKTRSRECNNPPPSGGGRSCVGE. CCP regions lie at residues 545–615 and 616–693; these read CEDE…RCGE and DLRW…QKEN. 2 consecutive Sushi domains span residues 569–628 and 629–690; these read EFCP…HCQK and IACV…RCVQ. Factor I module (FIM) stretches follow at residues 695–770 and 771–843; these read LTQA…ASAE and KACG…AETQ. Residue threonine 696 is glycosylated (O-linked (GalNAc...) threonine). Cystine bridges form between cysteine 702–cysteine 713, cysteine 715–cysteine 750, cysteine 721–cysteine 743, cysteine 728–cysteine 763, cysteine 773–cysteine 782, cysteine 776–cysteine 789, cysteine 791–cysteine 825, cysteine 797–cysteine 818, and cysteine 805–cysteine 838. Asparagine 754 carries N-linked (GlcNAc...) (complex) asparagine glycosylation.

It belongs to the complement C6/C7/C8/C9 family. As to quaternary structure, monomer or dimer; as a C5b-7 complex it can also form multimeric rosettes. Component of the membrane attack complex (MAC), composed of complement C5b, C6, C7, C8A, C8B, C8G and multiple copies of the pore-forming subunit C9. C-, N- and O-glycosylated. O-glycosylated with core 1 or possibly core 8 glycans.

It is found in the secreted. Its subcellular location is the target cell membrane. Membrane attack complex (MAC) assembly is inhibited by CD59, thereby protecting self-cells from damage during complement activation. MAC assembly is also inhibited by clusterin (CLU) chaperones that inhibit polymerization of C9. Its function is as follows. Component of the membrane attack complex (MAC), a multiprotein complex activated by the complement cascade, which inserts into a target cell membrane and forms a pore, leading to target cell membrane rupture and cell lysis. The MAC is initiated by proteolytic cleavage of C5 into complement C5b in response to the classical, alternative, lectin and GZMK complement pathways. The complement pathways consist in a cascade of proteins that leads to phagocytosis and breakdown of pathogens and signaling that strengthens the adaptive immune system. C7 serves as a membrane anchor. During MAC assembly, associates with C5b and C6 to form the C5b-7 complex, a key lipophilic precursor of the MAC complex, which associates with the outer leaflet and reduces the energy for membrane bending. The protein is Complement component C7 of Homo sapiens (Human).